We begin with the raw amino-acid sequence, 142 residues long: Acidic phospholipase A2 KBf-grIB (142 aa).

7 disulfides stabilise this stretch: C28–C94, C44–C141, C46–C62, C61–C122, C68–C115, C78–C108, and C101–C113. Residues Y45, G47, and G49 each coordinate Ca(2+). H65 is a catalytic residue. Residue D66 coordinates Ca(2+). The active site involves D116.

The protein belongs to the phospholipase A2 family. Group I subfamily. D49 sub-subfamily. The cofactor is Ca(2+). Expressed by the venom gland.

The protein localises to the secreted. The catalysed reaction is a 1,2-diacyl-sn-glycero-3-phosphocholine + H2O = a 1-acyl-sn-glycero-3-phosphocholine + a fatty acid + H(+). Its function is as follows. PLA2 catalyzes the calcium-dependent hydrolysis of the 2-acyl groups in 3-sn-phosphoglycerides. This Bungarus fasciatus (Banded krait) protein is Acidic phospholipase A2 KBf-grIB.